Reading from the N-terminus, the 230-residue chain is N-(5'-phosphoribosyl)anthranilate isomerase (230 aa).

The protein belongs to the TrpF family.

The catalysed reaction is N-(5-phospho-beta-D-ribosyl)anthranilate = 1-(2-carboxyphenylamino)-1-deoxy-D-ribulose 5-phosphate. Its pathway is amino-acid biosynthesis; L-tryptophan biosynthesis; L-tryptophan from chorismate: step 3/5. In Ralstonia nicotianae (strain ATCC BAA-1114 / GMI1000) (Ralstonia solanacearum), this protein is N-(5'-phosphoribosyl)anthranilate isomerase.